Reading from the N-terminus, the 311-residue chain is Bifunctional protein FolD (311 aa).

Residue 174–176 (GKG) coordinates NADP(+).

Belongs to the tetrahydrofolate dehydrogenase/cyclohydrolase family. In terms of assembly, homodimer.

It catalyses the reaction (6R)-5,10-methylene-5,6,7,8-tetrahydrofolate + NADP(+) = (6R)-5,10-methenyltetrahydrofolate + NADPH. It carries out the reaction (6R)-5,10-methenyltetrahydrofolate + H2O = (6R)-10-formyltetrahydrofolate + H(+). The protein operates within one-carbon metabolism; tetrahydrofolate interconversion. Its function is as follows. Catalyzes the oxidation of 5,10-methylenetetrahydrofolate to 5,10-methenyltetrahydrofolate and then the hydrolysis of 5,10-methenyltetrahydrofolate to 10-formyltetrahydrofolate. This chain is Bifunctional protein FolD, found in Pyrobaculum neutrophilum (strain DSM 2338 / JCM 9278 / NBRC 100436 / V24Sta) (Thermoproteus neutrophilus).